The sequence spans 475 residues: TOM1-like protein 1 (475 aa).

Residues 22 to 154 (ATFAGVQTED…DLLKKGVQFP (133 aa)) enclose the VHS domain. Residues 155-175 (PLDGEPETKQEAGQISPSRPT) form a disordered region. The span at 165-175 (EAGQISPSRPT) shows a compositional bias: polar residues. Ser-170 carries the post-translational modification Phosphoserine. One can recognise a GAT domain in the interval 199–287 (EQIGKLHSEL…AILGYERFTR (89 aa)). The tract at residues 296 to 317 (KRNPTEANQTSSEPSAPSCDLL) is disordered. The segment covering 300–310 (TEANQTSSEPS) has biased composition (polar residues). Ser-313 is modified (phosphoserine). The interaction with GRB2 stretch occupies residues 392 to 395 (YDNF). An SH3-binding motif is present at residues 421–425 (LPPLP). The segment at 442–445 (YEVM) is interaction with PIK3R1. The residue at position 458 (Tyr-458) is a Phosphotyrosine. Residues 458-461 (YEEI) carry the SH2-binding motif.

This sequence belongs to the TOM1 family. As to quaternary structure, interacts with the SH2 and SH3 domains of FYN when phosphorylated. Also interacts with GRB2 and PIK3R1 when phosphorylated. Interacts with LYN. Post-translationally, phosphorylated on tyrosines by FYN and LYN.

The protein resides in the golgi apparatus. It localises to the golgi stack. Its subcellular location is the endosome membrane. The protein localises to the cytoplasm. It is found in the membrane. Its function is as follows. Probable adapter protein involved in signaling pathways. Interacts with the SH2 and SH3 domains of various signaling proteins when it is phosphorylated. May promote FYN activation, possibly by disrupting intramolecular SH3-dependent interactions. The sequence is that of TOM1-like protein 1 (Tom1l1) from Rattus norvegicus (Rat).